Consider the following 264-residue polypeptide: MTNPAPSDALVIAGKHYRSRLLTGTGKFKDLDETRLATEAAAAEIVTVAIRRVNIGQDPNAPSLLDVLPPERYTLLPNTAGCYTAEEAVRTCRLARELLDGHNLTKLEVLGDEKTLYPDVVQTLKAAEQLVADGFEVMVYTSDDPILAKRLEEIGCVAVMPLAAPIGSGLGIQNKYNLLEIIDNAKVPIIVDAGVGTASDAAIAMELGCDGVLMNTAIAGARDPILMASAMRKAIEAGREAFLAGRIPRKRYASASSPVDGVIG.

Lys-106 acts as the Schiff-base intermediate with DXP in catalysis. 1-deoxy-D-xylulose 5-phosphate is bound by residues Gly-167, 193–194, and 215–216; these read AG and NT.

This sequence belongs to the ThiG family. Homotetramer. Forms heterodimers with either ThiH or ThiS.

It is found in the cytoplasm. The catalysed reaction is [ThiS sulfur-carrier protein]-C-terminal-Gly-aminoethanethioate + 2-iminoacetate + 1-deoxy-D-xylulose 5-phosphate = [ThiS sulfur-carrier protein]-C-terminal Gly-Gly + 2-[(2R,5Z)-2-carboxy-4-methylthiazol-5(2H)-ylidene]ethyl phosphate + 2 H2O + H(+). It participates in cofactor biosynthesis; thiamine diphosphate biosynthesis. In terms of biological role, catalyzes the rearrangement of 1-deoxy-D-xylulose 5-phosphate (DXP) to produce the thiazole phosphate moiety of thiamine. Sulfur is provided by the thiocarboxylate moiety of the carrier protein ThiS. In vitro, sulfur can be provided by H(2)S. The protein is Thiazole synthase of Xanthomonas euvesicatoria pv. vesicatoria (strain 85-10) (Xanthomonas campestris pv. vesicatoria).